We begin with the raw amino-acid sequence, 213 residues long: Orotate phosphoribosyltransferase (213 aa).

K26 serves as a coordination point for 5-phospho-alpha-D-ribose 1-diphosphate. 34–35 serves as a coordination point for orotate; that stretch reads FF. Residues 72-73, R98, K99, K102, and 123-131 contribute to the 5-phospho-alpha-D-ribose 1-diphosphate site; these read YK and DDVISAGTS. Orotate is bound by residues S127 and R155.

The protein belongs to the purine/pyrimidine phosphoribosyltransferase family. PyrE subfamily. As to quaternary structure, homodimer. Mg(2+) is required as a cofactor.

It carries out the reaction orotidine 5'-phosphate + diphosphate = orotate + 5-phospho-alpha-D-ribose 1-diphosphate. The protein operates within pyrimidine metabolism; UMP biosynthesis via de novo pathway; UMP from orotate: step 1/2. In terms of biological role, catalyzes the transfer of a ribosyl phosphate group from 5-phosphoribose 1-diphosphate to orotate, leading to the formation of orotidine monophosphate (OMP). The protein is Orotate phosphoribosyltransferase of Neisseria gonorrhoeae (strain ATCC 700825 / FA 1090).